The primary structure comprises 230 residues: ATP-dependent dethiobiotin synthetase BioD (230 aa).

12-17 (DVGKTV) provides a ligand contact to ATP. Threonine 16 lines the Mg(2+) pocket. The active site involves lysine 37. Threonine 41 provides a ligand contact to substrate. Residues aspartate 49, 108 to 111 (EGAG), 168 to 169 (GS), and 198 to 200 (PEG) each bind ATP. 2 residues coordinate Mg(2+): aspartate 49 and glutamate 108.

It belongs to the dethiobiotin synthetase family. In terms of assembly, homodimer. The cofactor is Mg(2+).

The protein localises to the cytoplasm. It catalyses the reaction (7R,8S)-7,8-diammoniononanoate + CO2 + ATP = (4R,5S)-dethiobiotin + ADP + phosphate + 3 H(+). It functions in the pathway cofactor biosynthesis; biotin biosynthesis; biotin from 7,8-diaminononanoate: step 1/2. Functionally, catalyzes a mechanistically unusual reaction, the ATP-dependent insertion of CO2 between the N7 and N8 nitrogen atoms of 7,8-diaminopelargonic acid (DAPA, also called 7,8-diammoniononanoate) to form a ureido ring. The chain is ATP-dependent dethiobiotin synthetase BioD from Corynebacterium kroppenstedtii (strain DSM 44385 / JCM 11950 / CIP 105744 / CCUG 35717).